The chain runs to 399 residues: Accessory Sec system protein translocase subunit SecY2 (399 aa).

10 consecutive transmembrane segments (helical) span residues 14–34 (ILFT…SIVG), 60–80 (LNVF…IMLL), 102–122 (IITI…YIHN), 128–148 (SNII…VWLA), 152–172 (ITYG…KSLF), 184–204 (VLLL…LLFI), 238–258 (ISIM…NLIA), 272–292 (FANP…SYLL), 335–355 (WTGA…TLLV), and 362–382 (IYFS…GETI).

The protein belongs to the SecY/SEC61-alpha family. SecY2 subfamily. Component of the accessory SecA2/SecY2 protein translocase complex required to export cell wall proteins. May form heterotrimers with SecE and SecG subunits.

The protein resides in the cell membrane. Functionally, part of the accessory SecA2/SecY2 system specifically required for export of possible cell wall proteins. The central subunit of a protein translocation channel. The polypeptide is Accessory Sec system protein translocase subunit SecY2 (Staphylococcus haemolyticus (strain JCSC1435)).